Here is a 315-residue protein sequence, read N- to C-terminus: Homoserine kinase (315 aa).

97–107 contributes to the ATP binding site; it reads PPARGLGSSAT.

It belongs to the GHMP kinase family. Homoserine kinase subfamily.

The protein resides in the cytoplasm. It catalyses the reaction L-homoserine + ATP = O-phospho-L-homoserine + ADP + H(+). The protein operates within amino-acid biosynthesis; L-threonine biosynthesis; L-threonine from L-aspartate: step 4/5. Catalyzes the ATP-dependent phosphorylation of L-homoserine to L-homoserine phosphate. This Prochlorococcus marinus (strain NATL2A) protein is Homoserine kinase.